Consider the following 473-residue polypeptide: MKLTLPRYDQAPVLVVGDVMLDRYWHGGTSRISPEAPVPVVRVEQIEDRPGGAANVALNIAALGAPALLVGVTGEDEAADSLTDSLAAAGVEAHFQRIEDQPTIVKLRVMSRHQQLLRMDFEEPFNTDAAAMAREVEALLAGVKVLVLSDYGKGALQNHQVLIQAARKKGIPVLADPKGKDFSIYRGASLITPNLHEFETIVGGCADEAELVSKGAKLMRELELGALLVTRGEHGMTLLRPEHAPLHLPARAREVFDVTGAGDTVISTLAASIAAGEELPNAVALANLAAGIVVGKLGTAAISAPELRRAVQREEGSERGVLSLDQLLIAIEDARAHGEKIVFTNGCFDILHAGHVTYLEQARAQGDRLIVAINDDASVSRLKGPGRPINAVDRRMAVLAGLGAVDWVVSFAEDTPERLLKQVQPDVLVKGGDYGIDQVVGADIVQAYGGEVRVLGLVENSSTTAIVEKIRNK.

The ribokinase stretch occupies residues 1 to 318; that stretch reads MKLTLPRYDQ…RAVQREEGSE (318 aa). Position 194-197 (194-197) interacts with ATP; that stretch reads NLHE. The active site involves Asp263. Residues 343 to 473 are cytidylyltransferase; sequence FTNGCFDILH…TAIVEKIRNK (131 aa).

This sequence in the N-terminal section; belongs to the carbohydrate kinase PfkB family. It in the C-terminal section; belongs to the cytidylyltransferase family. Homodimer.

It catalyses the reaction D-glycero-beta-D-manno-heptose 7-phosphate + ATP = D-glycero-beta-D-manno-heptose 1,7-bisphosphate + ADP + H(+). It carries out the reaction D-glycero-beta-D-manno-heptose 1-phosphate + ATP + H(+) = ADP-D-glycero-beta-D-manno-heptose + diphosphate. The protein operates within nucleotide-sugar biosynthesis; ADP-L-glycero-beta-D-manno-heptose biosynthesis; ADP-L-glycero-beta-D-manno-heptose from D-glycero-beta-D-manno-heptose 7-phosphate: step 1/4. It participates in nucleotide-sugar biosynthesis; ADP-L-glycero-beta-D-manno-heptose biosynthesis; ADP-L-glycero-beta-D-manno-heptose from D-glycero-beta-D-manno-heptose 7-phosphate: step 3/4. Its function is as follows. Catalyzes the phosphorylation of D-glycero-D-manno-heptose 7-phosphate at the C-1 position to selectively form D-glycero-beta-D-manno-heptose-1,7-bisphosphate. Catalyzes the ADP transfer from ATP to D-glycero-beta-D-manno-heptose 1-phosphate, yielding ADP-D-glycero-beta-D-manno-heptose. The chain is Bifunctional protein HldE from Ectopseudomonas mendocina (strain ymp) (Pseudomonas mendocina).